Reading from the N-terminus, the 484-residue chain is Protein phosphatase 1B (484 aa).

A compositionally biased stretch (basic and acidic residues) spans 1-14; sequence MGAFLDKPKTEKHN. The interval 1–20 is disordered; that stretch reads MGAFLDKPKTEKHNAHGAGN. G2 carries the N-myristoyl glycine lipid modification. K12 is covalently cross-linked (Glycyl lysine isopeptide (Lys-Gly) (interchain with G-Cter in ISG15)). The PPM-type phosphatase domain occupies 23–295; sequence RYGLSSMQGW…DNMSIVLVCF (273 aa). Residues D60 and G61 each coordinate Mn(2+). K142 is covalently cross-linked (Glycyl lysine isopeptide (Lys-Gly) (interchain with G-Cter in ISG15)). D243 and D286 together coordinate Mn(2+). The residue at position 391 (S391) is a Phosphoserine. A disordered region spans residues 431–484; that stretch reads EENPAEQAATAASSNSDAGNTVAMQESHTESKSDLAELDSCTEDAGTKMSGEKL. Over residues 440 to 456 the composition is skewed to polar residues; that stretch reads TAASSNSDAGNTVAMQE.

This sequence belongs to the PP2C family. Monomer. Interacts with PAK6. Interacts with the phosphorylated form of IKBKB/IKKB. The cofactor is Mg(2+). Requires Mn(2+) as cofactor. In terms of processing, isgylation negatively regulates its activity. N-myristoylation is essential for the recognition of its substrates for dephosphorylation.

The protein localises to the cytoplasm. The protein resides in the cytosol. It localises to the membrane. It carries out the reaction O-phospho-L-seryl-[protein] + H2O = L-seryl-[protein] + phosphate. It catalyses the reaction O-phospho-L-threonyl-[protein] + H2O = L-threonyl-[protein] + phosphate. Its function is as follows. Enzyme with a broad specificity. Dephosphorylates PRKAA1 and PRKAA2. Inhibits TBK1-mediated antiviral signaling by dephosphorylating it at 'Ser-172'. Plays an important role in the termination of TNF-alpha-mediated NF-kappa-B activation through dephosphorylating and inactivating IKBKB/IKKB. This chain is Protein phosphatase 1B (PPM1B), found in Bos taurus (Bovine).